The primary structure comprises 859 residues: Collagen alpha-1(II) chain (859 aa).

Positions 1–607 (LQGLPGKDGE…LGQTEKGPDP (607 aa)) are disordered. A 4-hydroxyproline mark is found at Pro31 and Pro40. Pro42 is modified (3-hydroxyproline). A 4-hydroxyproline mark is found at Pro43 and Pro46. The segment covering 78–121 (ERGSPGAQGLQGPRGLPGTPGTDGPKGATGPAGPNGAQGPPGLQ) has biased composition (low complexity). Positions 136 to 147 (KGDRGDVGEKGP) are enriched in basic and acidic residues. 2 stretches are compositionally biased toward low complexity: residues 204 to 220 (PAGFAGPPGADGQPGAK) and 249 to 277 (PTGVTGPKGARGAQGPPGATGFPGAAGRV). The residue at position 279 (Pro279) is a 3-hydroxyproline. Pro residues predominate over residues 279–292 (PPGPNGNPGPPGPP). 3 positions are modified to 4-hydroxyproline: Pro280, Pro286, and Pro292. Residues 306-321 (DAGPPGRAGDPGLQGP) show a composition bias toward low complexity. Over residues 487 to 501 (RGDKGETGEAGERGL) the composition is skewed to basic and acidic residues. The tract at residues 491–586 (GETGEAGERG…PGPPGPPGPP (96 aa)) is triple-helical region. Pro516 carries the 3-hydroxyproline modification. The span at 520 to 529 (SGDQGAAGPA) shows a compositional bias: low complexity. Pro553 is modified (4-hydroxyproline). 3-hydroxyproline is present on Pro558. Position 559 is a 4-hydroxyproline (Pro559). Positions 570–586 (PAGPPGNPGPPGPPGPP) are enriched in pro residues. Residue Pro573 is modified to 3-hydroxyproline. 4-hydroxyproline is present on residues Pro574 and Pro577. Pro579 is modified (3-hydroxyproline). Residues Pro580 and Pro583 each carry the 4-hydroxyproline modification. 3-hydroxyproline is present on Pro585. Pro586 is subject to 4-hydroxyproline. Positions 587–613 (GTGIDMSAFAGLGQTEKGPDPIRYMRA) are nonhelical region (C-terminal). The propeptide at 614 to 859 (DEAAGGLRQH…GVDIGPVCFL (246 aa)) is C-terminal propeptide. Positions 625-859 (VEVDATLKSL…GVDIGPVCFL (235 aa)) constitute a Fibrillar collagen NC1 domain. 3 disulfide bridges follow: Cys655–Cys687, Cys695–Cys857, and Cys765–Cys810. 5 residues coordinate Ca(2+): Asp673, Asn675, Gln676, Cys678, and Asp681. An N-linked (GlcNAc...) asparagine glycan is attached at Asn760.

It belongs to the fibrillar collagen family. As to quaternary structure, homotrimers of alpha 1(II) chains. Post-translationally, contains mostly 4-hydroxyproline. Prolines at the third position of the tripeptide repeating unit (G-X-P) are 4-hydroxylated in some or all of the chains. In terms of processing, contains 3-hydroxyproline at a few sites. This modification occurs on the first proline residue in the sequence motif Gly-Pro-Hyp, where Hyp is 4-hydroxyproline. Lysine residues at the third position of the tripeptide repeating unit (G-X-Y) are 5-hydroxylated in some or all of the chains. Post-translationally, O-glycosylated on hydroxylated lysine residues. The O-linked glycan consists of a Glc-Gal disaccharide.

It localises to the secreted. Its subcellular location is the extracellular space. The protein localises to the extracellular matrix. Type II collagen is specific for cartilaginous tissues. It is essential for the normal embryonic development of the skeleton, for linear growth and for the ability of cartilage to resist compressive forces. The chain is Collagen alpha-1(II) chain from Gallus gallus (Chicken).